We begin with the raw amino-acid sequence, 518 residues long: Glucan 1,4-alpha-maltohexaosidase (518 aa).

The first 33 residues, 1-33 (MKMRTGKKGFLSILLAFLLVITSIPFTLVDVEA), serve as a signal peptide directing secretion. Residues N139, D196, A219, D221, D232, D238, D240, and D242 each coordinate Ca(2+). D196 is a binding site for Na(+). Na(+) contacts are provided by D221, D232, and D238. D269 functions as the Nucleophile in the catalytic mechanism. Position 273 (H273) interacts with Ca(2+). E299 serves as the catalytic Proton donor.

It belongs to the glycosyl hydrolase 13 family. Ca(2+) is required as a cofactor. The cofactor is Na(+).

It is found in the secreted. It carries out the reaction Hydrolysis of (1-&gt;4)-alpha-D-glucosidic linkages in amylaceous polysaccharides, to remove successive maltohexaose residues from the non-reducing chain ends.. It participates in glycan degradation; starch degradation. The sequence is that of Glucan 1,4-alpha-maltohexaosidase from Bacillus sp. (strain 707).